The sequence spans 129 residues: Large ribosomal subunit protein bL17 (129 aa).

This sequence belongs to the bacterial ribosomal protein bL17 family. Part of the 50S ribosomal subunit. Contacts protein L32.

This chain is Large ribosomal subunit protein bL17, found in Desulfotalea psychrophila (strain LSv54 / DSM 12343).